An 818-amino-acid chain; its full sequence is Dipeptidyl-peptidase 7 (818 aa).

An N-terminal signal peptide occupies residues Met1–Ala22. Active-site charge relay system residues include His87, Asp223, and Ser645.

The protein belongs to the peptidase S46 family.

Catalyzes the removal of dipeptides from the N-terminus of oligopeptides. Most efficiently cleaves the synthetic substrate Met-Leu-methylcoumaryl-7-amide (Met-Leu-MCA), and slowly hydrolyzes Leu-Gln-, Lys-Ala-, Leu-Arg, and Ala-Asn-MCA. Is likely involved in amino acid metabolism and bacterial growth/survival of asaccharolytic P.endodontalis, that utilizes amino acids from extracellular proteinaceous nutrients as energy and carbon sources. In Porphyromonas endodontalis (strain ATCC 35406 / DSM 24491 / JCM 8526 / CCUG 16442 / BCRC 14492 / NCTC 13058 / HG 370) (Bacteroides endodontalis), this protein is Dipeptidyl-peptidase 7.